Here is a 62-residue protein sequence, read N- to C-terminus: Large ribosomal subunit protein bL35 (62 aa).

Residues 25–62 (EQAYRSHLSQNKTTKQKRQARKSVQMHSSDVKRFKALI) are disordered. Positions 53–62 (SDVKRFKALI) are enriched in basic and acidic residues.

Belongs to the bacterial ribosomal protein bL35 family.

This Mycoplasmopsis fermentans (Mycoplasma fermentans) protein is Large ribosomal subunit protein bL35.